A 233-amino-acid polypeptide reads, in one-letter code: Octanoyltransferase (233 aa).

The region spanning 36–211 is the BPL/LPL catalytic domain; it reads DTTPDEIWLV…EFTRQLGYPT (176 aa). Substrate contacts are provided by residues 75-82, 142-144, and 155-157; these read RGGQVTYH, SLG, and GLA. Cys173 acts as the Acyl-thioester intermediate in catalysis.

Belongs to the LipB family.

The protein resides in the cytoplasm. It catalyses the reaction octanoyl-[ACP] + L-lysyl-[protein] = N(6)-octanoyl-L-lysyl-[protein] + holo-[ACP] + H(+). It functions in the pathway protein modification; protein lipoylation via endogenous pathway; protein N(6)-(lipoyl)lysine from octanoyl-[acyl-carrier-protein]: step 1/2. Its function is as follows. Catalyzes the transfer of endogenously produced octanoic acid from octanoyl-acyl-carrier-protein onto the lipoyl domains of lipoate-dependent enzymes. Lipoyl-ACP can also act as a substrate although octanoyl-ACP is likely to be the physiological substrate. This chain is Octanoyltransferase, found in Yersinia pestis bv. Antiqua (strain Antiqua).